Reading from the N-terminus, the 453-residue chain is Aryl hydrocarbon receptor nuclear translocator homolog (453 aa).

The bHLH domain maps to 44 to 97 (FARENHSEIERRRRNKMTHYINELAEMVPQCASLGRKPDKLTILRMAVSHMKGI). 2 consecutive PAS domains span residues 115-193 (DQEL…LDLK) and 277-347 (ASMP…LSDQ). One can recognise a PAC domain in the interval 348 to 392 (PMRINIRVRTSTDYIPCTVSAYKFMNPYSEQFEYVVATHQIAPQE). The tract at residues 410-453 (EFGELGGAPSAVDYGQSSSGGWRPEAQGAPQAQWQWDPMNGYNQ) is disordered.

Interacts with hif-1. Heterodimer; efficient DNA binding requires dimerization with another bHLH protein. Forms a heterodimer with ahr-1; binds DNA as heterodimer. Forms a heterodimer with PAS domain-containing protein cky-1; binds DNA as heterodimer. In terms of tissue distribution, expressed in many cell types throughout development, including hypodermal cells, intestinal cells, pharyngeal cells, and neurons. Expressed in every cell during embryo.

It is found in the nucleus. Transcription factor. Efficient DNA binding requires dimerization with another bHLH protein, such as cky-1 or ahr-1. Regulates transcription of target genes, probably acting in complex with cky-1. Has a role in cellular differentiation. Required for pharyngeal development. In collaboration with ahr-1 it is involved in RMEL/R and SDQR neuron cell migration. Acts in the cellular response to hypoxia. Involved in aggregation behavior by regulating soluble guanylate cyclase gene expression in the URX neurons. The sequence is that of Aryl hydrocarbon receptor nuclear translocator homolog from Caenorhabditis elegans.